The following is a 274-amino-acid chain: tRNA (guanine-N(1)-)-methyltransferase (274 aa).

S-adenosyl-L-methionine is bound by residues Gly-116 and 140-145 (LGDYVL).

This sequence belongs to the RNA methyltransferase TrmD family. As to quaternary structure, homodimer.

The protein resides in the cytoplasm. It carries out the reaction guanosine(37) in tRNA + S-adenosyl-L-methionine = N(1)-methylguanosine(37) in tRNA + S-adenosyl-L-homocysteine + H(+). Its function is as follows. Specifically methylates guanosine-37 in various tRNAs. The sequence is that of tRNA (guanine-N(1)-)-methyltransferase from Arthrobacter sp. (strain FB24).